The primary structure comprises 5112 residues: Malformin synthetase mlfA (5112 aa).

An adenylation 1 region spans residues 225–616; it reads ERHAANRPHS…CGRADTQVKL (392 aa). The region spanning 757-830 is the Carrier 1 domain; the sequence is SRLEQEIQLA…EAASLAEVQE (74 aa). S791 carries the O-(pantetheine 4'-phosphoryl)serine modification. The tract at residues 868-1299 is condensation 1; it reads EDVFPCTTMQ…ALDSLTLLQA (432 aa). The interval 1327 to 1716 is adenylation 2; sequence DRRVTRQPDT…GRKDTQVKLR (390 aa). One can recognise a Carrier 2 domain in the interval 1854–1931; that stretch reads TAASELERTL…QLAAELGESP (78 aa). S1891 bears the O-(pantetheine 4'-phosphoryl)serine mark. 2 disordered regions span residues 1926-1961 and 1994-2034; these read ELGE…DGVD and GGSS…VPEP. Low complexity-rich tracts occupy residues 1930-1941 and 1994-2012; these read SPRSSTSSASSS and GGSS…SSSS. The interval 2064 to 2479 is condensation 2; that stretch reads EDIYPATALQ…AVSYSDKQTL (416 aa). The tract at residues 2502 to 2894 is adenylation 3; the sequence is IRTPHAPAVC…IGRRDGQVKL (393 aa). A Carrier 3 domain is found at 3030–3106; sequence RPTTAKECEM…QLLFHLRNAK (77 aa). S3067 is modified (O-(pantetheine 4'-phosphoryl)serine). Condensation regions lie at residues 3122–3586 and 3607–4044; these read WVDL…TYEQ and NIYP…EQLV. Residues 4069–4459 are adenylation 4; it reads HSSRQAVCAW…VGRKDNQIKF (391 aa). The region spanning 4593–4669 is the Carrier 4 domain; the sequence is MPSTEAECIM…DLARHNSLVQ (77 aa). An O-(pantetheine 4'-phosphoryl)serine modification is found at S4630. Positions 4724–5106 are condensation 5; that stretch reads IVVDIPGRIS…VEKVVALLRD (383 aa).

Belongs to the NRP synthetase family.

Its pathway is secondary metabolite biosynthesis. Nonribosomal peptide synthetase; part of the gene cluster that mediates the biosynthesis of malformins, cyclic pentapeptides with a disulfide bond between 2 consecutive cysteins, that show potential anti-tumor as well as antimalarial and antitrypanosomal properties. The nonribosomal peptide synthetase mlfA is responsible of the formation of the cyclic pentapeptide. MlfA probably acts iteratively on one amino acid and possesses multiple amino acid specificities since it is involved in the biosynthesis of multiple malformins, including malformin C and malformin A2. Malformin C corresponds to a cyclo[D-Cys-D-Cys-Val-D-Leu-Val] pentapeptide whereas malformin A2 corresponds to a cyclo[D-Cys-D-Cys-Val-D-Leu-Ile] pentapeptide. The malformin biosynthesis clusters in malformin-producing fungi also contain enzymes involved in the formation of the disulfide bond between the two consecutive cysteins within malformins, in addition to additional tailoring enzymes such as methyltransferases or oxidoreductases. They are also composed of up to 4 major facilitator superfamily transporters, and transcription factors probably involved in the regulation of the expression of those clusters. This chain is Malformin synthetase mlfA, found in Aspergillus brasiliensis (strain CBS 101740 / IMI 381727 / IBT 21946).